Consider the following 198-residue polypeptide: Recombination protein RecR (198 aa).

A C4-type zinc finger spans residues 57 to 72; it reads CSVCGHITDKDPCYIC. Positions 80–175 constitute a Toprim domain; that stretch reads SVICVVQESK…KVTRIAHGLP (96 aa).

This sequence belongs to the RecR family.

May play a role in DNA repair. It seems to be involved in an RecBC-independent recombinational process of DNA repair. It may act with RecF and RecO. This chain is Recombination protein RecR, found in Listeria monocytogenes serotype 4b (strain CLIP80459).